We begin with the raw amino-acid sequence, 359 residues long: 3-dehydroquinate synthase (359 aa).

Residues 71 to 76 (DGEAYK), 105 to 109 (GVVGD), 129 to 130 (TT), lysine 142, and lysine 151 each bind NAD(+). The Zn(2+) site is built by glutamate 184, histidine 247, and histidine 264.

This sequence belongs to the sugar phosphate cyclases superfamily. Dehydroquinate synthase family. Requires Co(2+) as cofactor. Zn(2+) is required as a cofactor. NAD(+) serves as cofactor.

It is found in the cytoplasm. It carries out the reaction 7-phospho-2-dehydro-3-deoxy-D-arabino-heptonate = 3-dehydroquinate + phosphate. The protein operates within metabolic intermediate biosynthesis; chorismate biosynthesis; chorismate from D-erythrose 4-phosphate and phosphoenolpyruvate: step 2/7. Functionally, catalyzes the conversion of 3-deoxy-D-arabino-heptulosonate 7-phosphate (DAHP) to dehydroquinate (DHQ). The polypeptide is 3-dehydroquinate synthase (Burkholderia orbicola (strain MC0-3)).